The sequence spans 545 residues: Glucose-6-phosphate isomerase (545 aa).

E351 acts as the Proton donor in catalysis. Catalysis depends on residues H382 and K510.

This sequence belongs to the GPI family.

It is found in the cytoplasm. The enzyme catalyses alpha-D-glucose 6-phosphate = beta-D-fructose 6-phosphate. It participates in carbohydrate biosynthesis; gluconeogenesis. The protein operates within carbohydrate degradation; glycolysis; D-glyceraldehyde 3-phosphate and glycerone phosphate from D-glucose: step 2/4. Functionally, catalyzes the reversible isomerization of glucose-6-phosphate to fructose-6-phosphate. The sequence is that of Glucose-6-phosphate isomerase from Helicobacter pylori (strain ATCC 700392 / 26695) (Campylobacter pylori).